The chain runs to 146 residues: uncharacterized protein (146 aa).

An HTH marR-type domain is found at 1-137 (MLSQEFFNSF…TINVMNQIHE (137 aa)).

This is an uncharacterized protein from Staphylococcus aureus (strain MRSA252).